The chain runs to 446 residues: Tetratricopeptide repeat protein 23 (446 aa).

TPR repeat units follow at residues 45-78, 137-170, 186-219, and 356-389; these read LHLC…TKIC, LELF…SKEM, SRIK…TETT, and AETY…ETFL.

In terms of assembly, associated with the EvC complex composed of EFCAB7, IQCE, EVC2 and EVC.

The protein resides in the cell projection. Its subcellular location is the cilium. Its function is as follows. Participates positively in the ciliary Hedgehog (Hh) signaling. This Rattus norvegicus (Rat) protein is Tetratricopeptide repeat protein 23 (Ttc23).